We begin with the raw amino-acid sequence, 380 residues long: Chaperone protein DnaJ (380 aa).

The 65-residue stretch at 5-69 (DYYEILGVSK…QKRAHYDQFG (65 aa)) folds into the J domain. A CR-type zinc finger spans residues 135–217 (GKETDIEIPS…CGGTGRVKRR (83 aa)). Positions 148, 151, 165, 168, 191, 194, 205, and 208 each coordinate Zn(2+). CXXCXGXG motif repeat units follow at residues 148-155 (CNTCHGTG), 165-172 (CPHCHGAG), 191-198 (CPYCGGTG), and 205-212 (CTTCGGTG).

This sequence belongs to the DnaJ family. Homodimer. Requires Zn(2+) as cofactor.

Its subcellular location is the cytoplasm. Functionally, participates actively in the response to hyperosmotic and heat shock by preventing the aggregation of stress-denatured proteins and by disaggregating proteins, also in an autonomous, DnaK-independent fashion. Unfolded proteins bind initially to DnaJ; upon interaction with the DnaJ-bound protein, DnaK hydrolyzes its bound ATP, resulting in the formation of a stable complex. GrpE releases ADP from DnaK; ATP binding to DnaK triggers the release of the substrate protein, thus completing the reaction cycle. Several rounds of ATP-dependent interactions between DnaJ, DnaK and GrpE are required for fully efficient folding. Also involved, together with DnaK and GrpE, in the DNA replication of plasmids through activation of initiation proteins. The sequence is that of Chaperone protein DnaJ from Geobacillus stearothermophilus (Bacillus stearothermophilus).